The primary structure comprises 692 residues: UvrABC system protein B (692 aa).

The region spanning 32–187 is the Helicase ATP-binding domain; it reads ENIENGEKAQ…LLNDLVGIQF (156 aa). 45 to 52 contacts ATP; sequence GATGTGKT. The Beta-hairpin motif lies at 98–121; sequence YYDYYQPEAYVPSSDTYIEKDSSV. Positions 436–631 constitute a Helicase C-terminal domain; that stretch reads QIDDLVGEIH…TIKKEIRDLI (196 aa). One can recognise a UVR domain in the interval 656–691; it reads KALVKKLEKEMQQAAAALDFEGAAQLRDMVLELRAM.

This sequence belongs to the UvrB family. Forms a heterotetramer with UvrA during the search for lesions. Interacts with UvrC in an incision complex.

Its subcellular location is the cytoplasm. The UvrABC repair system catalyzes the recognition and processing of DNA lesions. A damage recognition complex composed of 2 UvrA and 2 UvrB subunits scans DNA for abnormalities. Upon binding of the UvrA(2)B(2) complex to a putative damaged site, the DNA wraps around one UvrB monomer. DNA wrap is dependent on ATP binding by UvrB and probably causes local melting of the DNA helix, facilitating insertion of UvrB beta-hairpin between the DNA strands. Then UvrB probes one DNA strand for the presence of a lesion. If a lesion is found the UvrA subunits dissociate and the UvrB-DNA preincision complex is formed. This complex is subsequently bound by UvrC and the second UvrB is released. If no lesion is found, the DNA wraps around the other UvrB subunit that will check the other stand for damage. The chain is UvrABC system protein B from Lactococcus lactis subsp. cremoris (strain MG1363).